Here is a 741-residue protein sequence, read N- to C-terminus: Ion-translocating oxidoreductase complex subunit C (741 aa).

4Fe-4S ferredoxin-type domains are found at residues 369–397 (GEPQ…QQLY) and 407–436 (KATT…VQYF). The [4Fe-4S] cluster site is built by cysteine 377, cysteine 380, cysteine 383, cysteine 387, cysteine 416, cysteine 419, cysteine 422, and cysteine 426. The segment at 627 to 654 (IARAKARKLEQQQQANAEPEEQVDPRKA) is disordered.

The protein belongs to the 4Fe4S bacterial-type ferredoxin family. RnfC subfamily. The complex is composed of six subunits: RsxA, RsxB, RsxC, RsxD, RsxE and RsxG. It depends on [4Fe-4S] cluster as a cofactor.

It localises to the cell inner membrane. Part of a membrane-bound complex that couples electron transfer with translocation of ions across the membrane. Required to maintain the reduced state of SoxR. This is Ion-translocating oxidoreductase complex subunit C from Escherichia coli O127:H6 (strain E2348/69 / EPEC).